Here is a 247-residue protein sequence, read N- to C-terminus: MFLLLVLLVAALPVNAEGGEIIWGTESKPHSRPYMAYIRFNDSKSVYRCGGFLVARDIVMTAAHCNGKVINVTLGIHNLKKKKNTQLIPVSEAIPHESFDNETLVNDIMLLKLERKAQLNSAVDTIALPKSKDWVKPGQVCTVAGWGKLANCTLSDTLQEVNLEVQKGQKCRSMSQTYNDSIQLCVGNPSENKATGKGDSGGPFVCNGVVQGIVSCRLCTGTLPRVFTRISSFMPWIRKTMKLLQQP.

An N-terminal signal peptide occupies residues 1–19; the sequence is MFLLLVLLVAALPVNAEGG. Glu-20 is a propeptide (activation peptide). One can recognise a Peptidase S1 domain in the interval 21 to 242; it reads IIWGTESKPH…FMPWIRKTMK (222 aa). An N-linked (GlcNAc...) asparagine glycan is attached at Asn-41. A disulfide bridge links Cys-49 with Cys-65. His-64 functions as the Charge relay system in the catalytic mechanism. N-linked (GlcNAc...) asparagine glycosylation is found at Asn-71 and Asn-101. Asp-107 (charge relay system) is an active-site residue. Disulfide bonds link Cys-141-Cys-206 and Cys-171-Cys-185. 2 N-linked (GlcNAc...) asparagine glycosylation sites follow: Asn-151 and Asn-179. The active-site Charge relay system is Ser-200.

Belongs to the peptidase S1 family. Granzyme subfamily.

It is found in the secreted. The protein resides in the cytoplasmic granule. In Mus musculus (Mouse), this protein is Mast cell protease 8 (Mcpt8).